A 138-amino-acid polypeptide reads, in one-letter code: Type II secretion system protein I (138 aa).

A propeptide spans 1 to 6 (MKHQRG) (leader sequence). Tyr7 is subject to N-methyltyrosine. A helical membrane pass occupies residues 7-29 (YSLIEVIVAFALLALALTLLLGS).

Belongs to the GSP I family. As to quaternary structure, type II secretion is composed of four main components: the outer membrane complex, the inner membrane complex, the cytoplasmic secretion ATPase and the periplasm-spanning pseudopilus. Interacts with core component XpsG. Post-translationally, cleaved by prepilin peptidase. In terms of processing, methylated by prepilin peptidase at the amino group of the N-terminal tyrosine once the leader sequence is cleaved by prepilin peptidase.

Its subcellular location is the cell inner membrane. In terms of biological role, component of the type II secretion system required for the energy-dependent secretion of extracellular factors such as proteases and toxins from the periplasm. Part of the pseudopilus tip complex that is critical for the recognition and binding of secretion substrates. This is Type II secretion system protein I (xpsI) from Xanthomonas campestris pv. campestris (strain ATCC 33913 / DSM 3586 / NCPPB 528 / LMG 568 / P 25).